The primary structure comprises 157 residues: Ribosome maturation factor RimP (157 aa).

The protein belongs to the RimP family.

It is found in the cytoplasm. Functionally, required for maturation of 30S ribosomal subunits. The chain is Ribosome maturation factor RimP from Bacillus pumilus (strain SAFR-032).